The chain runs to 135 residues: Large ribosomal subunit protein uL16c (135 aa).

It belongs to the universal ribosomal protein uL16 family. In terms of assembly, part of the 50S ribosomal subunit.

It is found in the plastid. The protein localises to the chloroplast. The chain is Large ribosomal subunit protein uL16c from Nandina domestica (Heavenly bamboo).